The chain runs to 772 residues: 5-methyltetrahydropteroyltriglutamate--homocysteine methyltransferase (772 aa).

5-methyltetrahydropteroyltri-L-glutamate is bound by residues 24–27 (RELK) and Lys-120. L-homocysteine-binding positions include 446-448 (IGS) and Glu-499. L-methionine is bound by residues 446–448 (IGS) and Glu-499. Trp-576 provides a ligand contact to 5-methyltetrahydropteroyltri-L-glutamate. Residue Asp-614 participates in L-homocysteine binding. Asp-614 contacts L-methionine. Glu-620 provides a ligand contact to 5-methyltetrahydropteroyltri-L-glutamate. Zn(2+) is bound by residues His-656, Cys-658, and Glu-680. His-709 functions as the Proton donor in the catalytic mechanism. A Zn(2+)-binding site is contributed by Cys-741.

Belongs to the vitamin-B12 independent methionine synthase family. Zn(2+) is required as a cofactor.

It carries out the reaction 5-methyltetrahydropteroyltri-L-glutamate + L-homocysteine = tetrahydropteroyltri-L-glutamate + L-methionine. It functions in the pathway amino-acid biosynthesis; L-methionine biosynthesis via de novo pathway; L-methionine from L-homocysteine (MetE route): step 1/1. Functionally, catalyzes the transfer of a methyl group from 5-methyltetrahydrofolate to homocysteine resulting in methionine formation. In Streptomyces coelicolor (strain ATCC BAA-471 / A3(2) / M145), this protein is 5-methyltetrahydropteroyltriglutamate--homocysteine methyltransferase.